The chain runs to 237 residues: uncharacterized protein (237 aa).

The GP-PDE domain maps to 4-237 (QFLIAHRGYS…VKFQIAAQLY (234 aa)).

This sequence to glycerophosphoryl diester phosphodiesterases (EC 3.1.4.46). To M.genitalium MG293.

This is an uncharacterized protein from Mycoplasma pneumoniae (strain ATCC 29342 / M129 / Subtype 1) (Mycoplasmoides pneumoniae).